Here is a 401-residue protein sequence, read N- to C-terminus: Imidazolonepropionase (401 aa).

Fe(3+)-binding residues include His70 and His72. Residues His70 and His72 each contribute to the Zn(2+) site. The 4-imidazolone-5-propanoate site is built by Arg79, Tyr142, and His175. Tyr142 is a binding site for N-formimidoyl-L-glutamate. His240 is a binding site for Fe(3+). Residue His240 coordinates Zn(2+). Gln243 provides a ligand contact to 4-imidazolone-5-propanoate. Residue Asp315 participates in Fe(3+) binding. Residue Asp315 coordinates Zn(2+). Positions 317 and 319 each coordinate N-formimidoyl-L-glutamate. A 4-imidazolone-5-propanoate-binding site is contributed by Thr320.

Belongs to the metallo-dependent hydrolases superfamily. HutI family. It depends on Zn(2+) as a cofactor. Requires Fe(3+) as cofactor.

The protein localises to the cytoplasm. The enzyme catalyses 4-imidazolone-5-propanoate + H2O = N-formimidoyl-L-glutamate. It functions in the pathway amino-acid degradation; L-histidine degradation into L-glutamate; N-formimidoyl-L-glutamate from L-histidine: step 3/3. In terms of biological role, catalyzes the hydrolytic cleavage of the carbon-nitrogen bond in imidazolone-5-propanoate to yield N-formimidoyl-L-glutamate. It is the third step in the universal histidine degradation pathway. In Caulobacter sp. (strain K31), this protein is Imidazolonepropionase.